A 449-amino-acid chain; its full sequence is Phosphoglucosamine mutase (449 aa).

The active-site Phosphoserine intermediate is the serine 100. 4 residues coordinate Mg(2+): serine 100, aspartate 240, aspartate 242, and aspartate 244. Position 100 is a phosphoserine (serine 100).

It belongs to the phosphohexose mutase family. It depends on Mg(2+) as a cofactor. In terms of processing, activated by phosphorylation.

It carries out the reaction alpha-D-glucosamine 1-phosphate = D-glucosamine 6-phosphate. In terms of biological role, catalyzes the conversion of glucosamine-6-phosphate to glucosamine-1-phosphate. This is Phosphoglucosamine mutase from Clostridium novyi (strain NT).